Consider the following 236-residue polypeptide: MTKRYWNIDLEEMMRAGVHFGHGTRKWNPRMAPYISAKRKGIHIINLTRTARFLSEACDLVFDAASRGKQFLIVGTKNKAADLVSRAAIRARCHYVNKKWLGGMLTNWSTTEKRLHKFRDLRTEQKTEGFNRLPKRDAAVLKRQLSRLETYLGGIKYMTGLPDIVIIIDQQEEYTALRECITLGIPTISLIDTNCNPDLADISIPANDDAIASIRFILNKLVFAICEGRSSYIQNS.

This sequence belongs to the universal ribosomal protein uS2 family.

Its subcellular location is the plastid. The protein resides in the chloroplast. In Crucihimalaya wallichii (Rock-cress), this protein is Small ribosomal subunit protein uS2c (rps2).